The following is a 572-amino-acid chain: DNA polymerase (572 aa).

Residues 1–222 (MSRKMFSCDF…LPMDKEIRKA (222 aa)) form a 3'-5' exonuclease and strand displacement activities region. The interval 56 to 66 (YFHNLKFDGAF) is interaction with the primer terminal protein. Mg(2+)-binding residues include aspartate 142 and aspartate 166. Positions 223 to 226 (YRGG) are DNA-binding; Involved in the formation of a stable complex between TP and phi29 DNA polymerase. The interval 227–572 (FTWLNDKYKE…VLVDSVFTIK (346 aa)) is initiation, polymerization and pyrophosphorolytic activities. Aspartate 246 and valine 247 together coordinate Mg(2+). Tyrosine 251, lysine 368, and lysine 380 together coordinate 5-methyl-UTP. Mg(2+) contacts are provided by aspartate 453 and aspartate 455. Aspartate 455 is a 5-methyl-UTP binding site.

It belongs to the DNA polymerase type-B family. In terms of assembly, interacts with the primer terminal protein; this interaction allows the initiation of TP-primed DNA replication at both viral DNA ends. Interacts with DNA. The cofactor is Mg(2+).

The enzyme catalyses DNA(n) + a 2'-deoxyribonucleoside 5'-triphosphate = DNA(n+1) + diphosphate. In terms of biological role, polymerase responsible for protein-primed viral DNA replication by strand displacement with high processivity and fidelity. To start replication, the DNA polymerase forms a heterodimer with a free primer terminal protein (TP), recognizes the replication origins at both 5' ends of the linear chromosome, and initiates replication using as primer the OH-group of Ser-232 of the TP. This polymerase possesses three enzymatic activities: DNA synthesis (polymerase), primer terminal protein (TP) deoxynucleotidylation, which is the formation of a covalent linkage (phosphoester) between the hydroxyl group of a specific serine residue in TP and 5'-dAMP, a reaction directed by the second T at the 3' end, and 3' to 5' exonuclease activity. Exonuclease activity has a proofreading purpose. The chain is DNA polymerase (G) from Bacillus phage M2 (Bacteriophage M2).